Here is a 149-residue protein sequence, read N- to C-terminus: Large ribosomal subunit protein bL9 (149 aa).

The protein belongs to the bacterial ribosomal protein bL9 family.

Its function is as follows. Binds to the 23S rRNA. The sequence is that of Large ribosomal subunit protein bL9 from Helicobacter pylori (strain HPAG1).